Reading from the N-terminus, the 627-residue chain is (-)-alpha-terpineol synthase, chloroplastic (627 aa).

Residues 1-52 (MDLISVLPSASKSCVCLHKPLSSSTHKLKPFCKTIRILVMPRRWEFARPSMS) constitute a chloroplast transit peptide. 3 residues coordinate Mg(2+): aspartate 378, aspartate 382, and aspartate 530. The DDXXD motif signature appears at 378–382 (DDMYD).

Belongs to the terpene synthase family. Tpsd subfamily. Mg(2+) is required as a cofactor. Requires Mn(2+) as cofactor.

The protein localises to the plastid. It is found in the chloroplast. It carries out the reaction (2E)-geranyl diphosphate + H2O = (S)-alpha-terpineol + diphosphate. It participates in terpene metabolism; oleoresin biosynthesis. Involved in defensive oleoresin formation in conifers in response to insect attack or other injury. Involved in monoterpene (C10) olefins biosynthesis. Produces 57.3% alpha-terpineol (15.1% (+)/84.9% (-)), 27.6% limonene (25.2% (+)/74.8% (-)), 8% terpinolene, 4.7% beta-pinene (14.8% (+)/85.2% (-)), 1.3% alpha-pinene (100% (+)) and 1.1% myrcene. This chain is (-)-alpha-terpineol synthase, chloroplastic (PT10), found in Pinus taeda (Loblolly pine).